Here is a 273-residue protein sequence, read N- to C-terminus: 2,3,4,5-tetrahydropyridine-2,6-dicarboxylate N-succinyltransferase (273 aa).

Substrate is bound by residues R104 and D141.

Belongs to the transferase hexapeptide repeat family. As to quaternary structure, homotrimer.

It is found in the cytoplasm. The enzyme catalyses (S)-2,3,4,5-tetrahydrodipicolinate + succinyl-CoA + H2O = (S)-2-succinylamino-6-oxoheptanedioate + CoA. It functions in the pathway amino-acid biosynthesis; L-lysine biosynthesis via DAP pathway; LL-2,6-diaminopimelate from (S)-tetrahydrodipicolinate (succinylase route): step 1/3. The chain is 2,3,4,5-tetrahydropyridine-2,6-dicarboxylate N-succinyltransferase from Laribacter hongkongensis (strain HLHK9).